The sequence spans 213 residues: MTISISDLRKDYRQQSLSETEVDPNPLQQFQTWFKQAIEAEILEPNAMTLATLSREGKPAARIVLLKEVDDRGFTFFTNYKSRKGEELAHDPWAALVFWWAELERQVRIEGSVSQVSAADSDRYFSSRPWGSRLGAWASEQSKAITGREVLEQNLRALEQEYRDREVPRPPHWGGYRLSPTLIEFWQGRPNRLHDRLCYRLQGDQWQLERLSP.

Substrate is bound by residues 9-12 and K67; that span reads RKDY. FMN-binding positions include 62-67, 77-78, R83, K84, and Q106; these read RIVLLK and FT. The substrate site is built by Y124, R128, and S132. FMN is bound by residues 141–142 and W186; that span reads QS. 192–194 is a binding site for substrate; it reads RLH. R196 is an FMN binding site.

This sequence belongs to the pyridoxamine 5'-phosphate oxidase family. As to quaternary structure, homodimer. The cofactor is FMN.

It catalyses the reaction pyridoxamine 5'-phosphate + O2 + H2O = pyridoxal 5'-phosphate + H2O2 + NH4(+). It carries out the reaction pyridoxine 5'-phosphate + O2 = pyridoxal 5'-phosphate + H2O2. The protein operates within cofactor metabolism; pyridoxal 5'-phosphate salvage; pyridoxal 5'-phosphate from pyridoxamine 5'-phosphate: step 1/1. It functions in the pathway cofactor metabolism; pyridoxal 5'-phosphate salvage; pyridoxal 5'-phosphate from pyridoxine 5'-phosphate: step 1/1. In terms of biological role, catalyzes the oxidation of either pyridoxine 5'-phosphate (PNP) or pyridoxamine 5'-phosphate (PMP) into pyridoxal 5'-phosphate (PLP). The chain is Pyridoxine/pyridoxamine 5'-phosphate oxidase from Cyanothece sp. (strain PCC 7425 / ATCC 29141).